A 231-amino-acid chain; its full sequence is 2-C-methyl-D-erythritol 4-phosphate cytidylyltransferase (231 aa).

The protein belongs to the IspD/TarI cytidylyltransferase family. IspD subfamily.

It catalyses the reaction 2-C-methyl-D-erythritol 4-phosphate + CTP + H(+) = 4-CDP-2-C-methyl-D-erythritol + diphosphate. The protein operates within isoprenoid biosynthesis; isopentenyl diphosphate biosynthesis via DXP pathway; isopentenyl diphosphate from 1-deoxy-D-xylulose 5-phosphate: step 2/6. Catalyzes the formation of 4-diphosphocytidyl-2-C-methyl-D-erythritol from CTP and 2-C-methyl-D-erythritol 4-phosphate (MEP). This Mycobacterium bovis (strain BCG / Pasteur 1173P2) protein is 2-C-methyl-D-erythritol 4-phosphate cytidylyltransferase.